We begin with the raw amino-acid sequence, 390 residues long: Caveolae-associated protein 1 (390 aa).

An N-acetylmethionine modification is found at Met-1. The interval 1–40 (MEDPTLYIVERPLPGYPDAEAPEPSSAGAQAAEEPSGAGS) is disordered. Positions 1 to 98 (MEDPTLYIVE…IQGELSKLGK (98 aa)) are required for homotrimerization and for interaction with CAVIN2 and CAVIN3. Over residues 22–40 (PEPSSAGAQAAEEPSGAGS) the composition is skewed to low complexity. Ser-36, Ser-40, and Ser-46 each carry phosphoserine. The tract at residues 52-62 (VLVLSLLDKII) is nuclear export signal. The tract at residues 53–75 (LVLSLLDKIIGAVDQIQLTQAQL) is leucine-zipper 1. Lys-116 participates in a covalent cross-link: Glycyl lysine isopeptide (Lys-Gly) (interchain with G-Cter in SUMO2). Ser-118 is modified (phosphoserine). Residue Lys-122 forms a Glycyl lysine isopeptide (Lys-Gly) (interchain with G-Cter in SUMO2) linkage. Residues 136-152 (KKLEVNEAELLRRRNFK) are nuclear localization signal. The residue at position 156 (Tyr-156) is a Phosphotyrosine. Lys-161 participates in a covalent cross-link: Glycyl lysine isopeptide (Lys-Gly) (interchain with G-Cter in SUMO1); alternate. Lys-161 is covalently cross-linked (Glycyl lysine isopeptide (Lys-Gly) (interchain with G-Cter in SUMO2); alternate). Lys-165 is covalently cross-linked (Glycyl lysine isopeptide (Lys-Gly) (interchain with G-Cter in SUMO2)). The interval 166-186 (LSISKSLKESEALPEKEGEEL) is leucine-zipper 2. Phosphoserine occurs at positions 167 and 169. Lys-170 is covalently cross-linked (Glycyl lysine isopeptide (Lys-Gly) (interchain with G-Cter in SUMO2)). Residues Ser-171 and Ser-175 each carry the phosphoserine modification. Residues 172–181 (LKESEALPEK) are compositionally biased toward basic and acidic residues. Positions 172–201 (LKESEALPEKEGEELGEGERPEEDAAALEL) are disordered. The span at 182–201 (EGEELGEGERPEEDAAALEL) shows a compositional bias: acidic residues. Positions 199-282 (LELSSDEAVE…RMNKLGTRLV (84 aa)) form a coiled coil. Phosphoserine is present on residues Ser-202 and Ser-203. Residues 233–249 (KKAFSKEKMEKTKVRTR) form a nuclear localization signal region. Positions 257 to 297 (LKTKENLEKTRHTLEKRMNKLGTRLVPAERREKLKTSRDKL) are leucine-zipper 3. Position 300 is a phosphoserine (Ser-300). Thr-302 bears the Phosphothreonine mark. The residue at position 308 (Tyr-308) is a Phosphotyrosine. A Glycyl lysine isopeptide (Lys-Gly) (interchain with G-Cter in SUMO2) cross-link involves residue Lys-326. The tract at residues 344-366 (VGADDDEGGAERGEAGDLRRGSS) is disordered. Residues 352–365 (GAERGEAGDLRRGS) show a composition bias toward basic and acidic residues. Ser-365, Ser-366, Ser-379, Ser-387, and Ser-389 each carry phosphoserine.

The protein belongs to the CAVIN family. Component of the CAVIN complex composed of CAVIN1, CAVIN2, CAVIN3 and CAVIN4. Homotrimer. Interacts with TTF1. Interacts with RNA polymerase I subunit POLR1A/RPA1. Binds the 3' end of pre-rRNA. Interacts with transcription factor ZNF148. Interacts with LIPE in the adipocyte cytoplasm. Interacts with CAV1 and CAVIN3. Interacts with CAVIN2. Interacts with CAVIN4 and CAV3. In terms of processing, phosphorylated. Present in active and inactive forms. Changes in phosphorylation pattern may alter activity. Phosphorylation at Tyr-156 is essential for its functionin the regulation of ribosomal transcriptional activity. Five truncated forms are found in the caveolae. These are thought to be the result of proteolysis and may be phosphorylation-dependent. Post-translationally, monoubiquitinated.

It localises to the membrane. It is found in the caveola. The protein localises to the cell membrane. Its subcellular location is the microsome. The protein resides in the endoplasmic reticulum. It localises to the cytoplasm. It is found in the cytosol. The protein localises to the mitochondrion. Its subcellular location is the nucleus. In terms of biological role, plays an important role in caveolae formation and organization. Essential for the formation of caveolae in all tissues. Core component of the CAVIN complex which is essential for recruitment of the complex to the caveolae in presence of calveolin-1 (CAV1). Essential for normal oligomerization of CAV1. Promotes ribosomal transcriptional activity in response to metabolic challenges in the adipocytes and plays an important role in the formation of the ribosomal transcriptional loop. Dissociates transcription complexes paused by DNA-bound TTF1, thereby releasing both RNA polymerase I and pre-RNA from the template. The caveolae biogenesis pathway is required for the secretion of proteins such as GASK1A. The protein is Caveolae-associated protein 1 of Homo sapiens (Human).